The primary structure comprises 169 residues: Cysteine synthase B (169 aa).

N6-(pyridoxal phosphate)lysine is present on lysine 45. Asparagine 75 is a pyridoxal 5'-phosphate binding site. The disordered stretch occupies residues 146 to 169 (ANGDNPEAHYTSTGPEIWRQTGGT).

Belongs to the cysteine synthase/cystathionine beta-synthase family. The cofactor is pyridoxal 5'-phosphate.

The enzyme catalyses O-acetyl-L-serine + hydrogen sulfide = L-cysteine + acetate. Its pathway is amino-acid biosynthesis; L-cysteine biosynthesis; L-cysteine from L-serine: step 2/2. In Pseudomonas syringae pv. syringae, this protein is Cysteine synthase B (cysM).